The primary structure comprises 464 residues: tRNA modification GTPase MnmE (464 aa).

Residues Arg27, Glu90, and Lys129 each coordinate (6S)-5-formyl-5,6,7,8-tetrahydrofolate. The 163-residue stretch at 222-384 folds into the TrmE-type G domain; sequence GVTLVLAGSV…LYDKIKTLIS (163 aa). GTP is bound by residues 232-237, 251-257, and 276-279; these read NAGKSS, SSYPGTT, and DTAG. Ser236 and Thr257 together coordinate Mg(2+). Lys464 provides a ligand contact to (6S)-5-formyl-5,6,7,8-tetrahydrofolate.

It belongs to the TRAFAC class TrmE-Era-EngA-EngB-Septin-like GTPase superfamily. TrmE GTPase family. In terms of assembly, homodimer. Heterotetramer of two MnmE and two MnmG subunits. K(+) serves as cofactor.

It is found in the cytoplasm. Exhibits a very high intrinsic GTPase hydrolysis rate. Involved in the addition of a carboxymethylaminomethyl (cmnm) group at the wobble position (U34) of certain tRNAs, forming tRNA-cmnm(5)s(2)U34. In Borrelia garinii subsp. bavariensis (strain ATCC BAA-2496 / DSM 23469 / PBi) (Borreliella bavariensis), this protein is tRNA modification GTPase MnmE.